We begin with the raw amino-acid sequence, 276 residues long: Monoglyceride lipase homolog (276 aa).

It belongs to the orthopoxvirus OPG043 family.

This chain is Monoglyceride lipase homolog (OPG043), found in Cynomys gunnisoni (Gunnison's prairie dog).